The primary structure comprises 165 residues: Peptide methionine sulfoxide reductase MsrA (165 aa).

The active site involves cysteine 10.

Belongs to the MsrA Met sulfoxide reductase family.

It carries out the reaction L-methionyl-[protein] + [thioredoxin]-disulfide + H2O = L-methionyl-(S)-S-oxide-[protein] + [thioredoxin]-dithiol. The enzyme catalyses [thioredoxin]-disulfide + L-methionine + H2O = L-methionine (S)-S-oxide + [thioredoxin]-dithiol. Its function is as follows. Has an important function as a repair enzyme for proteins that have been inactivated by oxidation. Catalyzes the reversible oxidation-reduction of methionine sulfoxide in proteins to methionine. This chain is Peptide methionine sulfoxide reductase MsrA, found in Campylobacter jejuni (strain RM1221).